The following is a 315-amino-acid chain: Glutamyl-Q tRNA(Asp) synthetase (315 aa).

L-glutamate contacts are provided by residues 23–27 (RFAPS) and E59. The short motif at 26–36 (PSPTGPLHIGS) is the 'HIGH' region element. Positions 115, 117, 142, and 146 each coordinate Zn(2+). 2 residues coordinate L-glutamate: Y202 and R220. A 'KMSKS' region motif is present at residues 258–262 (KLSKQ). K261 is an ATP binding site.

This sequence belongs to the class-I aminoacyl-tRNA synthetase family. GluQ subfamily. It depends on Zn(2+) as a cofactor.

Catalyzes the tRNA-independent activation of glutamate in presence of ATP and the subsequent transfer of glutamate onto a tRNA(Asp). Glutamate is transferred on the 2-amino-5-(4,5-dihydroxy-2-cyclopenten-1-yl) moiety of the queuosine in the wobble position of the QUC anticodon. This is Glutamyl-Q tRNA(Asp) synthetase from Ralstonia nicotianae (strain ATCC BAA-1114 / GMI1000) (Ralstonia solanacearum).